A 288-amino-acid chain; its full sequence is Bifunctional protein FolD 2 (288 aa).

Residues 166-168 (GRS) and serine 191 each bind NADP(+).

This sequence belongs to the tetrahydrofolate dehydrogenase/cyclohydrolase family. Homodimer.

It carries out the reaction (6R)-5,10-methylene-5,6,7,8-tetrahydrofolate + NADP(+) = (6R)-5,10-methenyltetrahydrofolate + NADPH. The enzyme catalyses (6R)-5,10-methenyltetrahydrofolate + H2O = (6R)-10-formyltetrahydrofolate + H(+). The protein operates within one-carbon metabolism; tetrahydrofolate interconversion. Functionally, catalyzes the oxidation of 5,10-methylenetetrahydrofolate to 5,10-methenyltetrahydrofolate and then the hydrolysis of 5,10-methenyltetrahydrofolate to 10-formyltetrahydrofolate. This Frankia alni (strain DSM 45986 / CECT 9034 / ACN14a) protein is Bifunctional protein FolD 2.